The chain runs to 147 residues: Allograft inflammatory factor 1 (147 aa).

Residue Ser-2 is modified to N-acetylserine. Position 11 is an N6-acetyllysine (Lys-11). Ser-39 is subject to Phosphoserine. The region spanning 45–80 (SKLEGFKEKYMEFDLNGNGDIDIMSLKRMLEKLGVP) is the EF-hand 1 domain. Ca(2+) contacts are provided by Asp-58, Asn-60, Asn-62, Asp-64, Thr-100, and Asp-105. Positions 81-115 (KTHLELKKLIGEVSSGSGETFSYPDFLRMMLGKRS) constitute an EF-hand 2; degenerate domain. The segment at 128–147 (AREKEKPTGPPAKKAISELP) is disordered.

Homodimer (Potential). Monomer. Interacts with LCP1. In terms of processing, phosphorylated on serine residues. In terms of tissue distribution, detected in T-lymphocytes and peripheral blood mononuclear cells.

Its subcellular location is the cytoplasm. The protein resides in the cytoskeleton. The protein localises to the cell projection. It localises to the ruffle membrane. It is found in the phagocytic cup. In terms of biological role, actin-binding protein that enhances membrane ruffling and RAC activation. Enhances the actin-bundling activity of LCP1. Binds calcium. Plays a role in RAC signaling and in phagocytosis. May play a role in macrophage activation and function. Promotes the proliferation of vascular smooth muscle cells and of T-lymphocytes. Enhances lymphocyte migration. Plays a role in vascular inflammation. The protein is Allograft inflammatory factor 1 (AIF1) of Homo sapiens (Human).